Here is a 459-residue protein sequence, read N- to C-terminus: GTPase Der (459 aa).

EngA-type G domains lie at 3–169 (PLVA…PPKE) and 183–358 (IRLA…DQFR). GTP-binding positions include 9–16 (GRPNVGKS), 56–60 (DTGGF), 119–122 (NKLD), 189–196 (GRPNVGKS), 236–240 (DTAGI), and 301–304 (NKWD). The KH-like domain maps to 359–442 (FRAPTPQLNR…PIRLIFKGRP (84 aa)).

This sequence belongs to the TRAFAC class TrmE-Era-EngA-EngB-Septin-like GTPase superfamily. EngA (Der) GTPase family. Associates with the 50S ribosomal subunit.

Functionally, GTPase that plays an essential role in the late steps of ribosome biogenesis. In Myxococcus xanthus (strain DK1622), this protein is GTPase Der.